We begin with the raw amino-acid sequence, 431 residues long: Serine/threonine-protein kinase Sgk1 (431 aa).

The disordered stretch occupies residues 58–93 (LNLTPPQDPELMNSNPSPPPSPSQQINLGPSSNPSA). Residues 81 to 93 (QQINLGPSSNPSA) show a composition bias toward polar residues. The Protein kinase domain occupies 98–355 (FHFLKVIGKG…FTEIKNHVFF (258 aa)). ATP-binding positions include 104 to 112 (IGKGSFGKV) and Lys127. Residue Asp222 is the Proton acceptor of the active site. The 76-residue stretch at 356–431 (SPINWDDLNA…SYAPSMDSYL (76 aa)) folds into the AGC-kinase C-terminal domain.

The protein belongs to the protein kinase superfamily. AGC Ser/Thr protein kinase family.

The protein resides in the cytoplasm. Its subcellular location is the nucleus. It localises to the endoplasmic reticulum. The catalysed reaction is L-seryl-[protein] + ATP = O-phospho-L-seryl-[protein] + ADP + H(+). It catalyses the reaction L-threonyl-[protein] + ATP = O-phospho-L-threonyl-[protein] + ADP + H(+). In terms of biological role, protein kinase that may play an important role in cellular stress response. May be involved in the regulation of processes such as cell survival, neuronal excitability and renal sodium excretion. This chain is Serine/threonine-protein kinase Sgk1 (sgk1), found in Fundulus heteroclitus (Killifish).